Here is a 1358-residue protein sequence, read N- to C-terminus: Indole-3-acetaldehyde oxidase (1358 aa).

A 2Fe-2S ferredoxin-type domain is found at 11–98 (STVVLAVNGK…RCSVTTSEGI (88 aa)). [2Fe-2S] cluster is bound by residues C50, C55, and C58. One can recognise an FAD-binding PCMH-type domain in the interval 241–419 (IAASGDGWYH…LSIFIPEWGS (179 aa)). The disordered stretch occupies residues 532 to 559 (SSAPSNIDTPNGSYTHETGSNVDSPERH). Residues 537 to 554 (NIDTPNGSYTHETGSNVD) are compositionally biased toward polar residues.

The protein belongs to the xanthine dehydrogenase family. In terms of assembly, aldehyde oxidases (AO) are homodimers and heterodimers of AO subunits. Requires [2Fe-2S] cluster as cofactor. FAD serves as cofactor. The cofactor is Mo-molybdopterin. Mostly expressed in roots, and, to a lower extent, in mesocotyl, leaves and coleoptile. Accumulates in apical region of maize coleoptiles (at protein level).

The protein localises to the cytoplasm. The enzyme catalyses indole-3-acetaldehyde + O2 + H2O = (indol-3-yl)acetate + H2O2 + H(+). Inhibited by 2-mercaptoethanol, p-chloromercuribenzoate, and iodoacetate. In terms of biological role, in higher plants aldehyde oxidases (AO) appear to be homo- and heterodimeric assemblies of AO subunits with probably different physiological functions. Involved in the biosynthesis of auxin from (indol-3-yl)acetaldehyde. Can also use indole-3-aldehyde and benzaldehyde as substrate. The polypeptide is Indole-3-acetaldehyde oxidase (AO1) (Zea mays (Maize)).